The chain runs to 249 residues: uncharacterized protein (249 aa).

11 to 34 (IFGGRSQIGGELARRLAAGATMVL) contacts NADP(+). S142 is a binding site for substrate. Y155 functions as the Proton acceptor in the catalytic mechanism.

The protein belongs to the short-chain dehydrogenases/reductases (SDR) family.

This is an uncharacterized protein from Mycobacterium tuberculosis (strain ATCC 25618 / H37Rv).